An 803-amino-acid polypeptide reads, in one-letter code: Translation initiation factor IF-2 (803 aa).

Basic and acidic residues predominate over residues 65–75; sequence PDKVEEKKEHT. The segment at 65-186 is disordered; the sequence is PDKVEEKKEH…PKSRKSKTLK (122 aa). Residues 175–185 are compositionally biased toward basic residues; it reads NKPKSRKSKTL. The 169-residue stretch at 300-468 folds into the tr-type G domain; sequence IRPPVVTIMG…ILLTADAALE (169 aa). A G1 region spans residues 309 to 316; it reads GHVDHGKT. 309-316 contributes to the GTP binding site; the sequence is GHVDHGKT. Residues 334-338 are G2; that stretch reads GITQH. The interval 355–358 is G3; the sequence is DTPG. Residues 355–359 and 409–412 contribute to the GTP site; these read DTPGH and NKID. The tract at residues 409 to 412 is G4; the sequence is NKID. A G5 region spans residues 445–447; the sequence is SAK.

This sequence belongs to the TRAFAC class translation factor GTPase superfamily. Classic translation factor GTPase family. IF-2 subfamily.

The protein resides in the cytoplasm. In terms of biological role, one of the essential components for the initiation of protein synthesis. Protects formylmethionyl-tRNA from spontaneous hydrolysis and promotes its binding to the 30S ribosomal subunits. Also involved in the hydrolysis of GTP during the formation of the 70S ribosomal complex. In Tropheryma whipplei (strain TW08/27) (Whipple's bacillus), this protein is Translation initiation factor IF-2.